The following is a 957-amino-acid chain: Melanoma-associated antigen E1 (957 aa).

Residues 1 to 433 (MSLVSQNSRR…RNPSKCSIVL (433 aa)) form a disordered region. 2 stretches are compositionally biased toward polar residues: residues 85–96 (SEASSASGQPTV) and 104–130 (LLATPSEGLSTSGPPTISKGLCTSVTL). Positions 138-156 (TSRPPTSSEEPSTSVPATP) are enriched in low complexity. Polar residues-rich tracts occupy residues 158 to 177 (EGTSTSVPPTASEGPSTSVV), 220 to 232 (LSTSVPPTATEGL), 256 to 306 (RSTT…GPST), 328 to 344 (LSTSVPPTATEGLSTSV), 364 to 380 (RSTSVPPTASDGSDTSV), and 414 to 428 (TLFSSSASVDRNPSK). MAGE domains follow at residues 491-690 (MEQN…YNEA) and 745-936 (LESK…YREA). The tract at residues 743-957 (SRLESKARKL…HRQFFVHNFR (215 aa)) is interaction with DTNA.

Interacts with DTNA. Interacts with TRIM28.

The protein localises to the cytoplasm. It localises to the perinuclear region. It is found in the nucleus. Its subcellular location is the cell membrane. Functionally, may enhance ubiquitin ligase activity of RING-type zinc finger-containing E3 ubiquitin-protein ligases. Proposed to act through recruitment and/or stabilization of the Ubl-conjugating enzyme (E2) at the E3:substrate complex. The sequence is that of Melanoma-associated antigen E1 (MAGEE1) from Macaca fascicularis (Crab-eating macaque).